We begin with the raw amino-acid sequence, 161 residues long: ATP synthase subunit b (161 aa).

A helical transmembrane segment spans residues 10-29 (AVVQLLNFLFLLWILNKLLY).

The protein belongs to the ATPase B chain family. In terms of assembly, F-type ATPases have 2 components, F(1) - the catalytic core - and F(0) - the membrane proton channel. F(1) has five subunits: alpha(3), beta(3), gamma(1), delta(1), epsilon(1). F(0) has three main subunits: a(1), b(2) and c(10-14). The alpha and beta chains form an alternating ring which encloses part of the gamma chain. F(1) is attached to F(0) by a central stalk formed by the gamma and epsilon chains, while a peripheral stalk is formed by the delta and b chains.

The protein localises to the cell inner membrane. In terms of biological role, f(1)F(0) ATP synthase produces ATP from ADP in the presence of a proton or sodium gradient. F-type ATPases consist of two structural domains, F(1) containing the extramembraneous catalytic core and F(0) containing the membrane proton channel, linked together by a central stalk and a peripheral stalk. During catalysis, ATP synthesis in the catalytic domain of F(1) is coupled via a rotary mechanism of the central stalk subunits to proton translocation. Its function is as follows. Component of the F(0) channel, it forms part of the peripheral stalk, linking F(1) to F(0). This Fervidobacterium nodosum (strain ATCC 35602 / DSM 5306 / Rt17-B1) protein is ATP synthase subunit b.